The following is a 125-amino-acid chain: Fluoride-specific ion channel FluC (125 aa).

Helical transmembrane passes span 2–22 (WLSILAIFCGAGLGALLRTGF), 35–55 (LGTLISNMVGGYLIGIALAFF), 68–88 (LIITGFLGGLTTFSSFSAEVV), and 98–118 (WALGTALLHLVGSLVLTLLGI). Na(+) contacts are provided by Gly75 and Thr78.

The protein belongs to the fluoride channel Fluc/FEX (TC 1.A.43) family.

Its subcellular location is the cell inner membrane. It catalyses the reaction fluoride(in) = fluoride(out). With respect to regulation, na(+) is not transported, but it plays an essential structural role and its presence is essential for fluoride channel function. Functionally, fluoride-specific ion channel. Important for reducing fluoride concentration in the cell, thus reducing its toxicity. The chain is Fluoride-specific ion channel FluC from Polynucleobacter asymbioticus (strain DSM 18221 / CIP 109841 / QLW-P1DMWA-1) (Polynucleobacter necessarius subsp. asymbioticus).